Consider the following 137-residue polypeptide: Nucleoside diphosphate kinase (137 aa).

Positions 9, 57, 85, 91, 102, and 112 each coordinate ATP. Histidine 115 functions as the Pros-phosphohistidine intermediate in the catalytic mechanism.

This sequence belongs to the NDK family. In terms of assembly, homotetramer. The cofactor is Mg(2+).

The protein resides in the cytoplasm. It catalyses the reaction a 2'-deoxyribonucleoside 5'-diphosphate + ATP = a 2'-deoxyribonucleoside 5'-triphosphate + ADP. The enzyme catalyses a ribonucleoside 5'-diphosphate + ATP = a ribonucleoside 5'-triphosphate + ADP. Functionally, major role in the synthesis of nucleoside triphosphates other than ATP. The ATP gamma phosphate is transferred to the NDP beta phosphate via a ping-pong mechanism, using a phosphorylated active-site intermediate. This is Nucleoside diphosphate kinase from Aliarcobacter butzleri (strain RM4018) (Arcobacter butzleri).